We begin with the raw amino-acid sequence, 90 residues long: Putative Fis-like DNA-binding protein (90 aa).

The H-T-H motif DNA-binding region spans 66-85 (QSRAAALLGIHRATLRKKLK).

This sequence belongs to the transcriptional regulatory Fis family.

The protein is Putative Fis-like DNA-binding protein of Xylella fastidiosa (strain 9a5c).